A 248-amino-acid chain; its full sequence is Probable transcriptional regulatory protein Acel_1346 (248 aa).

Belongs to the TACO1 family.

The protein resides in the cytoplasm. This Acidothermus cellulolyticus (strain ATCC 43068 / DSM 8971 / 11B) protein is Probable transcriptional regulatory protein Acel_1346.